Reading from the N-terminus, the 462-residue chain is Integrator complex subunit 12 (462 aa).

The tract at residues leucine 39–valine 132 is disordered. Positions isoleucine 59–valine 86 are enriched in polar residues. Lysine 68 is covalently cross-linked (Glycyl lysine isopeptide (Lys-Gly) (interchain with G-Cter in SUMO2)). Over residues threonine 88–threonine 125 the composition is skewed to basic and acidic residues. Position 128 is a phosphoserine (serine 128). The PHD-type zinc finger occupies glycine 159–glutamine 215. Lysine 254 is covalently cross-linked (Glycyl lysine isopeptide (Lys-Gly) (interchain with G-Cter in SUMO2)). Residues proline 305–glutamine 328 show a composition bias toward polar residues. The interval proline 305–lysine 462 is disordered. Composition is skewed to low complexity over residues lysine 347–valine 358 and valine 382–serine 431. Residues glycine 434–asparagine 443 are compositionally biased toward polar residues. Residues glutamine 449–lysine 462 show a composition bias toward basic residues.

The protein belongs to the Integrator subunit 12 family. As to quaternary structure, component of the Integrator complex, composed of core subunits INTS1, INTS2, INTS3, INTS4, INTS5, INTS6, INTS7, INTS8, INTS9/RC74, INTS10, INTS11/CPSF3L, INTS12, INTS13, INTS14 and INTS15. The core complex associates with protein phosphatase 2A subunits PPP2CA and PPP2R1A, to form the Integrator-PP2A (INTAC) complex. In terms of processing, dephosphorylated at Ser-128 by the PNUTS-PP1 complex, promoting RNA polymerase II transcription pause-release.

It localises to the nucleus. Its function is as follows. Component of the integrator complex, a multiprotein complex that terminates RNA polymerase II (Pol II) transcription in the promoter-proximal region of genes. The integrator complex provides a quality checkpoint during transcription elongation by driving premature transcription termination of transcripts that are unfavorably configured for transcriptional elongation: the complex terminates transcription by (1) catalyzing dephosphorylation of the C-terminal domain (CTD) of Pol II subunit POLR2A/RPB1 and SUPT5H/SPT5, (2) degrading the exiting nascent RNA transcript via endonuclease activity and (3) promoting the release of Pol II from bound DNA. The integrator complex is also involved in terminating the synthesis of non-coding Pol II transcripts, such as enhancer RNAs (eRNAs), small nuclear RNAs (snRNAs), telomerase RNAs and long non-coding RNAs (lncRNAs). Mediates recruitment of cytoplasmic dynein to the nuclear envelope, probably as component of the integrator complex. In Bos taurus (Bovine), this protein is Integrator complex subunit 12 (INTS12).